The chain runs to 206 residues: Probable GTP-binding protein EngB (206 aa).

The EngB-type G domain maps to 27–201; sequence SGIEVAFAGR…EEKLNQWYSK (175 aa). GTP-binding positions include 35–42, 62–66, 80–83, 147–150, and 180–182; these read GRSNAGKS, GRTQL, DLPG, TKAD, and FSS. Residues S42 and T64 each coordinate Mg(2+).

This sequence belongs to the TRAFAC class TrmE-Era-EngA-EngB-Septin-like GTPase superfamily. EngB GTPase family. Mg(2+) is required as a cofactor.

Functionally, necessary for normal cell division and for the maintenance of normal septation. The chain is Probable GTP-binding protein EngB from Idiomarina loihiensis (strain ATCC BAA-735 / DSM 15497 / L2-TR).